Here is a 123-residue protein sequence, read N- to C-terminus: Galectin-2 (123 aa).

The region spanning 4–123 (KVEIMNMDMK…LRYLSVQGGF (120 aa)) is the Galectin domain. A beta-D-galactoside is bound at residue 65–71 (WGKEQRD).

In terms of assembly, homodimer.

In terms of biological role, this protein binds beta-galactoside. Its physiological function is not yet known. The polypeptide is Galectin-2 (LGALS2) (Sus scrofa (Pig)).